The primary structure comprises 542 residues: Chaperonin GroEL 2 (542 aa).

ATP-binding positions include 30-33 (TLGP), Lys-51, 87-91 (DGTTT), Gly-415, and Asp-496.

This sequence belongs to the chaperonin (HSP60) family. Forms a cylinder of 14 subunits composed of two heptameric rings stacked back-to-back. Interacts with the co-chaperonin GroES.

It localises to the cytoplasm. It carries out the reaction ATP + H2O + a folded polypeptide = ADP + phosphate + an unfolded polypeptide.. In terms of biological role, together with its co-chaperonin GroES, plays an essential role in assisting protein folding. The GroEL-GroES system forms a nano-cage that allows encapsulation of the non-native substrate proteins and provides a physical environment optimized to promote and accelerate protein folding. The chain is Chaperonin GroEL 2 from Rhizobium etli (strain ATCC 51251 / DSM 11541 / JCM 21823 / NBRC 15573 / CFN 42).